Here is a 501-residue protein sequence, read N- to C-terminus: L-arabinose isomerase (501 aa).

The Mn(2+) site is built by Glu-306, Glu-333, His-350, and His-449.

Belongs to the arabinose isomerase family. The cofactor is Mn(2+).

It catalyses the reaction beta-L-arabinopyranose = L-ribulose. It participates in carbohydrate degradation; L-arabinose degradation via L-ribulose; D-xylulose 5-phosphate from L-arabinose (bacterial route): step 1/3. In terms of biological role, catalyzes the conversion of L-arabinose to L-ribulose. This chain is L-arabinose isomerase, found in Herpetosiphon aurantiacus (strain ATCC 23779 / DSM 785 / 114-95).